A 157-amino-acid chain; its full sequence is Transcription elongation factor GreA (157 aa).

Belongs to the GreA/GreB family.

In terms of biological role, necessary for efficient RNA polymerase transcription elongation past template-encoded arresting sites. The arresting sites in DNA have the property of trapping a certain fraction of elongating RNA polymerases that pass through, resulting in locked ternary complexes. Cleavage of the nascent transcript by cleavage factors such as GreA or GreB allows the resumption of elongation from the new 3'terminus. GreA releases sequences of 2 to 3 nucleotides. This Bartonella henselae (strain ATCC 49882 / DSM 28221 / CCUG 30454 / Houston 1) (Rochalimaea henselae) protein is Transcription elongation factor GreA.